A 420-amino-acid polypeptide reads, in one-letter code: Mannose-1-phosphate guanylyltransferase regulatory subunit alpha (420 aa).

The tract at residues 2 to 251 (LKAVILIGGP…DGIWSQIKSA (250 aa)) is substrate-binding domain. GDP-alpha-D-mannose contacts are provided by Glu-85 and Gln-247. Positions 273–420 (LARHTAGGPR…SRSFTNQIIL (148 aa)) are hexapeptide repeat domain. Residues 356 to 384 (TPNDPNPNDPRARMDSESLFKDGKLLPAI) form a C-loop region.

The protein belongs to the transferase hexapeptide repeat family. In terms of assembly, component of the GMPPA-GMPPB mannose-1-phosphate guanylyltransferase complex composed of 4 GMPPA subunits and 8 GMPPB subunits; the complex is organized into three layers, a central layer made up of 2 GMPPA dimers sandwiched between two layers each made up of 2 GMPPB dimers.

The protein localises to the cytoplasm. Its function is as follows. Regulatory subunit of the GMPPA-GMPPB mannose-1-phosphate guanylyltransferase complex; reduces the catalytic activity of GMPPB when part of the complex. Mediates allosteric feedback inhibition of GMPPB catalytic activity upon binding GDP-alpha-D-mannose. Together with GMPPB regulates GDP-alpha-D-mannose levels. The polypeptide is Mannose-1-phosphate guanylyltransferase regulatory subunit alpha (Gmppa) (Rattus norvegicus (Rat)).